Reading from the N-terminus, the 122-residue chain is S-adenosylmethionine decarboxylase proenzyme (122 aa).

The Schiff-base intermediate with substrate; via pyruvic acid role is filled by Ser69. At Ser69 the chain carries Pyruvic acid (Ser); by autocatalysis. His74 acts as the Proton acceptor; for processing activity in catalysis. Cys89 (proton donor; for catalytic activity) is an active-site residue.

This sequence belongs to the prokaryotic AdoMetDC family. Type 1 subfamily. Heterotetramer of two alpha and two beta chains arranged as a dimer of alpha/beta heterodimers. The cofactor is pyruvate. In terms of processing, is synthesized initially as an inactive proenzyme. Formation of the active enzyme involves a self-maturation process in which the active site pyruvoyl group is generated from an internal serine residue via an autocatalytic post-translational modification. Two non-identical subunits are generated from the proenzyme in this reaction, and the pyruvate is formed at the N-terminus of the alpha chain, which is derived from the carboxyl end of the proenzyme. The post-translation cleavage follows an unusual pathway, termed non-hydrolytic serinolysis, in which the side chain hydroxyl group of the serine supplies its oxygen atom to form the C-terminus of the beta chain, while the remainder of the serine residue undergoes an oxidative deamination to produce ammonia and the pyruvoyl group blocking the N-terminus of the alpha chain.

The enzyme catalyses S-adenosyl-L-methionine + H(+) = S-adenosyl 3-(methylsulfanyl)propylamine + CO2. It participates in amine and polyamine biosynthesis; S-adenosylmethioninamine biosynthesis; S-adenosylmethioninamine from S-adenosyl-L-methionine: step 1/1. Its function is as follows. Catalyzes the decarboxylation of S-adenosylmethionine to S-adenosylmethioninamine (dcAdoMet), the propylamine donor required for the synthesis of the polyamines spermine and spermidine from the diamine putrescine. The protein is S-adenosylmethionine decarboxylase proenzyme of Sulfurisphaera tokodaii (strain DSM 16993 / JCM 10545 / NBRC 100140 / 7) (Sulfolobus tokodaii).